A 477-amino-acid polypeptide reads, in one-letter code: Aspartyl/glutamyl-tRNA(Asn/Gln) amidotransferase subunit B (477 aa).

This sequence belongs to the GatB/GatE family. GatB subfamily. Heterotrimer of A, B and C subunits.

It carries out the reaction L-glutamyl-tRNA(Gln) + L-glutamine + ATP + H2O = L-glutaminyl-tRNA(Gln) + L-glutamate + ADP + phosphate + H(+). It catalyses the reaction L-aspartyl-tRNA(Asn) + L-glutamine + ATP + H2O = L-asparaginyl-tRNA(Asn) + L-glutamate + ADP + phosphate + 2 H(+). In terms of biological role, allows the formation of correctly charged Asn-tRNA(Asn) or Gln-tRNA(Gln) through the transamidation of misacylated Asp-tRNA(Asn) or Glu-tRNA(Gln) in organisms which lack either or both of asparaginyl-tRNA or glutaminyl-tRNA synthetases. The reaction takes place in the presence of glutamine and ATP through an activated phospho-Asp-tRNA(Asn) or phospho-Glu-tRNA(Gln). This chain is Aspartyl/glutamyl-tRNA(Asn/Gln) amidotransferase subunit B, found in Ureaplasma urealyticum serovar 10 (strain ATCC 33699 / Western).